A 474-amino-acid chain; its full sequence is Glutamate--tRNA ligase 1 (474 aa).

The 'HIGH' region signature appears at 11-21 (PSPTGFLHIGG). Residues 113 to 133 (TARAEGRAPRYDGRWRDRDPS) show a composition bias toward basic and acidic residues. The disordered stretch occupies residues 113–136 (TARAEGRAPRYDGRWRDRDPSEAP). Residues 240–244 (KLSKR) carry the 'KMSKS' region motif. Residue Lys-243 participates in ATP binding.

This sequence belongs to the class-I aminoacyl-tRNA synthetase family. Glutamate--tRNA ligase type 1 subfamily. Monomer.

The protein resides in the cytoplasm. It catalyses the reaction tRNA(Glu) + L-glutamate + ATP = L-glutamyl-tRNA(Glu) + AMP + diphosphate. Its function is as follows. Catalyzes the attachment of glutamate to tRNA(Glu) in a two-step reaction: glutamate is first activated by ATP to form Glu-AMP and then transferred to the acceptor end of tRNA(Glu). The polypeptide is Glutamate--tRNA ligase 1 (Methylorubrum extorquens (strain PA1) (Methylobacterium extorquens)).